The sequence spans 83 residues: Protein ORF5 (83 aa).

The protein belongs to the microviridae C protein family.

In terms of biological role, plays a central role in the packaging of viral DNA into phage procapsid, which occurs in the late stage of infection. Can interact with the replicative complex after the completion of one round of DNA synthesis. When protein ORF5 is bound to the replicative form, the complex becomes accessible to procapsid and serves as a DNA packaging apparatus. In Spiroplasma melliferum (SpV4), this protein is Protein ORF5.